Reading from the N-terminus, the 391-residue chain is MQKLINSVQNYAWGSKTALTELYGMENPSSQPMAELWMGAHPKSSSRVQNAAGDIVSLRDVIESDKSTLLGEAVAKRFGELPFLFKVLCAAQPLSIQVHPNKHNSEIGFAKENAAGIPMDAAERNYKDPNHKPELVFALTPFLAMNAFREFSEIVSLLQPVAGAHPAIAHFLQQPDAERLSELFASLLNMQGEEKSRALAILKSALDSQQGEPWQTIRLISEFYPEDSGLFSPLLLNVVKLNPGEAMFLFAETPHAYLQGVALEVMANSDNVLRAGLTPKYIDIPELVANVKFEAKPANQLLTQPVKQGAELDFPIPVDDFAFSLHDLSDKETTISQQSAAILFCVEGDATLWKGSQQLQLKPGESAFIAANESPVTVKGHGRLARVYNKL.

Zn(2+) is bound by residues Gln-97, His-99, Glu-134, and His-255. Arg-274 is an active-site residue. Residue Lys-280 is modified to N6-acetyllysine.

Belongs to the mannose-6-phosphate isomerase type 1 family. Requires Zn(2+) as cofactor.

The protein resides in the cytoplasm. The enzyme catalyses D-mannose 6-phosphate = D-fructose 6-phosphate. Its function is as follows. Involved in the conversion of glucose to GDP-L-fucose, which can be converted to L-fucose, a capsular polysaccharide. The chain is Mannose-6-phosphate isomerase (manA) from Escherichia coli (strain K12).